The primary structure comprises 20 residues: Brevinin-1DYc (20 aa).

Cys14 and Cys20 are oxidised to a cystine.

Expressed by the skin glands.

The protein localises to the secreted. Its function is as follows. Antimicrobial peptide. Has low activity against the Gram-positive bacterium S.aureus and the Gram-negative bacterium E.coli (MIC&lt;15 uM). Has a strong hemolytic activity. This is Brevinin-1DYc from Rana dybowskii (Dybovsky's frog).